The sequence spans 278 residues: Digeranylgeranylglyceryl phosphate synthase (278 aa).

The next 8 helical transmembrane spans lie at 15–35 (VIGS…WKIV), 36–56 (PIKL…GYII), 89–109 (IVLF…AFII), 133–153 (LIVA…FFEG), 159–179 (TLIP…VKGI), 203–223 (WFIS…PYFF), 225–245 (FNII…LVVL), and 258–278 (AYMK…TLPI).

The protein belongs to the UbiA prenyltransferase family. DGGGP synthase subfamily. Requires Mg(2+) as cofactor.

It localises to the cell membrane. The catalysed reaction is sn-3-O-(geranylgeranyl)glycerol 1-phosphate + (2E,6E,10E)-geranylgeranyl diphosphate = 2,3-bis-O-(geranylgeranyl)-sn-glycerol 1-phosphate + diphosphate. The protein operates within membrane lipid metabolism; glycerophospholipid metabolism. Functionally, prenyltransferase that catalyzes the transfer of the geranylgeranyl moiety of geranylgeranyl diphosphate (GGPP) to the C2 hydroxyl of (S)-3-O-geranylgeranylglyceryl phosphate (GGGP). This reaction is the second ether-bond-formation step in the biosynthesis of archaeal membrane lipids. The protein is Digeranylgeranylglyceryl phosphate synthase of Sulfurisphaera tokodaii (strain DSM 16993 / JCM 10545 / NBRC 100140 / 7) (Sulfolobus tokodaii).